We begin with the raw amino-acid sequence, 355 residues long: 3-dehydroquinate synthase (355 aa).

Residues 98–102 (GVIGD), 122–123 (TT), Lys135, Lys144, and 162–165 (TLNT) each bind NAD(+). Positions 177, 240, and 257 each coordinate Zn(2+).

Belongs to the sugar phosphate cyclases superfamily. Dehydroquinate synthase family. Co(2+) is required as a cofactor. Requires Zn(2+) as cofactor. NAD(+) serves as cofactor.

It localises to the cytoplasm. It catalyses the reaction 7-phospho-2-dehydro-3-deoxy-D-arabino-heptonate = 3-dehydroquinate + phosphate. It participates in metabolic intermediate biosynthesis; chorismate biosynthesis; chorismate from D-erythrose 4-phosphate and phosphoenolpyruvate: step 2/7. Its function is as follows. Catalyzes the conversion of 3-deoxy-D-arabino-heptulosonate 7-phosphate (DAHP) to dehydroquinate (DHQ). In Dictyoglomus thermophilum (strain ATCC 35947 / DSM 3960 / H-6-12), this protein is 3-dehydroquinate synthase.